We begin with the raw amino-acid sequence, 349 residues long: Flavonol synthase/flavanone 3-hydroxylase (349 aa).

One can recognise a Fe2OG dioxygenase domain in the interval 213–310; the sequence is DIVYMLKINY…RMSWPVFLEP (98 aa). The Fe cation site is built by His238, Asp240, and His291.

Belongs to the iron/ascorbate-dependent oxidoreductase family. The cofactor is Fe cation. It depends on L-ascorbate as a cofactor.

It localises to the cytoplasm. The enzyme catalyses a (2R,3R)-dihydroflavonol + 2-oxoglutarate + O2 = a flavonol + succinate + CO2 + H2O. It catalyses the reaction a (2S)-flavan-4-one + 2-oxoglutarate + O2 = a (2R,3R)-dihydroflavonol + succinate + CO2. It participates in secondary metabolite biosynthesis; flavonoid biosynthesis. Its function is as follows. Catalyzes the formation of flavonols from dihydroflavonols. It can act on dihydrokaempferol to produce kaempferol, on dihydroquercetin to produce quercitin and on dihydromyricetin to produce myricetin. This Solanum tuberosum (Potato) protein is Flavonol synthase/flavanone 3-hydroxylase.